The primary structure comprises 207 residues: Large ribosomal subunit protein uL4 (207 aa).

The disordered stretch occupies residues 44 to 78 (QRQGTHDVKNRSEVRGGGRKPWRQKGTGRARQGSI). Residues 47-59 (GTHDVKNRSEVRG) show a composition bias toward basic and acidic residues. Basic residues predominate over residues 60 to 71 (GGRKPWRQKGTG).

Belongs to the universal ribosomal protein uL4 family. Part of the 50S ribosomal subunit.

One of the primary rRNA binding proteins, this protein initially binds near the 5'-end of the 23S rRNA. It is important during the early stages of 50S assembly. It makes multiple contacts with different domains of the 23S rRNA in the assembled 50S subunit and ribosome. Its function is as follows. Forms part of the polypeptide exit tunnel. The polypeptide is Large ribosomal subunit protein uL4 (Brevibacillus brevis (strain 47 / JCM 6285 / NBRC 100599)).